Here is a 2531-residue protein sequence, read N- to C-terminus: Highly reducing polyketide synthase gloL (2531 aa).

The region spanning 15–435 (YEPLAIVGMG…GANAHVILDS (421 aa)) is the Ketosynthase family 3 (KS3) domain. Catalysis depends on for beta-ketoacyl synthase activity residues Cys-187, His-322, and His-358. A disordered region spans residues 449-525 (TNGLSVNGHS…GHSVNGHSKP (77 aa)). Residues 453 to 503 (SVNGHSINGNSVNGHSVNGHSTNGHSINGNSVNGHSVNGNSVNGHSTNGHS) show a composition bias toward low complexity. Positions 505 to 521 (NGHSANGNSINGHSVNG) are enriched in polar residues. Positions 602 to 909 (MVFTGQGAQW…VTALERGKDC (308 aa)) are malonyl-CoA:ACP transacylase (MAT) domain. An N-terminal hotdog fold region spans residues 971 to 1099 (HEILGSRTVE…GQIRSGTDNP (129 aa)). The tract at residues 971-1251 (HEILGSRTVE…GGQFSPIEED (281 aa)) is dehydratase (DH) domain. The PKS/mFAS DH domain occupies 971-1254 (HEILGSRTVE…FSPIEEDSSD (284 aa)). The Proton acceptor; for dehydratase activity role is filled by His-1003. Residues 1109 to 1254 (DHPRSVPSPY…FSPIEEDSSD (146 aa)) form a C-terminal hotdog fold region. Asp-1169 functions as the Proton donor; for dehydratase activity in the catalytic mechanism. The tract at residues 1419–1597 (DFFTAAGHSK…FSGCDATVYD (179 aa)) is methyltransferase (CMet) domain. Positions 1806–2114 (GLLQTLRWVP…KGSHIGKIVV (309 aa)) are enoyl reductase (ER) (ER) domain. A ketoreductase (KR) domain region spans residues 2139-2312 (GYLLVGGLGG…ASVVDIGVMG (174 aa)). In terms of domain architecture, Carrier spans 2413 to 2505 (MSSVETDSSI…ALGLLTIEGL (93 aa)). Ser-2464 bears the O-(pantetheine 4'-phosphoryl)serine mark.

The protein operates within mycotoxin biosynthesis. Functionally, highly reducing polyketide synthase; part of the gene cluster that mediates the biosynthesis of pneumocandins, lipohexapeptides of the echinocandin family that prevent fungal cell wall formation by non-competitive inhibition of beta-1,3-glucan synthase. The 10,12-dimethylmyristoyl side chain is synthesized by the reducing polyketide synthase gloL/GLPKS4. The thioesterase gloN/GLHYD exclusively interacts with gloL/GLPKS4 to maintain turnover of the polyketide side chain. The 10R,12S-dimethylmyristic acid is then transferred to the first thiolation domain of the nonribosomal peptide synthetase gloA/GLNRPS4 by the acyl-AMP ligase gloD/GLligase, followed by its acylation to L-ornithine to trigger elongation of the cyclic hexapeptide. L-ornithine, 4R-hydroxyl-L-proline (generated from L-proline by the dioxygenase gloF/GLOXY2), 3S-hydroxyl-L-homotyrosine (generated by gloG/GLHtyB, gloH/GLHtyA, gloI/GLHtyC, gloJ/GLHtyD and hydroxylated at C-3 by the dioxygenase gloM/GLOXY1), 3R-hydroxyl-L-glutamine (generated from L-glutamine probably by the dioxygenase gloE/GLOXY3) and 3S-hydroxyl-L-proline (generated from L-proline by the dioxygenase gloF/GLOXY2 to yield pneumocandin B0), or 3S-hydroxyl-4S-methyl-L-proline (generated from L-leucine by the dioxygenase gloC/GLOXY4 to yield pneumocandin A0) are sequentially added to the growing chain. The last C domain of gloA/GLNRPS4 is proposed to be responsible for cyclization by condensation to form the peptide bond between L-ornithine and 3S-hydroxyl-4S-methyl-L-proline (for pneumocandin A0) or 3S-hydroxyl-L-proline (for pneumocandin B0). Finally, the subsequent C-4 hydroxylation of 3S-hydroxyl-L-homotyrosine and L-ornithine dihydroxylation at C-4 and C-5 are performed by the cytochrome P450 monooxygenases gloP/GLP450-1 and gloO/GLP450-2, respectively. The chain is Highly reducing polyketide synthase gloL from Glarea lozoyensis (strain ATCC 20868 / MF5171).